A 186-amino-acid polypeptide reads, in one-letter code: ADP-ribosylation factor-like protein 8B (186 aa).

An intramembrane region (note=Mediates targeting to membranes) is located at residues 1 to 19 (MLALISRLLDWFRSLFWKE). Residues 29–35 (QYSGKTT), 71–75 (DIGGQ), and 130–133 (NKRD) each bind GTP. K141 participates in a covalent cross-link: Glycyl lysine isopeptide (Lys-Gly) (interchain with G-Cter in ubiquitin).

It belongs to the small GTPase superfamily. Arf family. In terms of assembly, interacts with tubulin. Interacts with BORCS5; recruits ARL8B to lysosomes. Interacts with VPS41; the interaction mediates the recruitment of the HOPS complex to lysosomes. Interacts (GTP-bound form) with PLEKHM2 (via RUN domain); the interaction is required to recruit the motor protein kinesin-1 on lysosomes. Interacts (GTP-bound form) with PLEKHM1 (via RUN domain); the interaction is required for PLEKHM1 localization to lysosomes and for ARL8B function in delivery and degradation of endocytic and autophagic cargo in lysosomes. PLEKHM1 and PLEKHM2 compete for interaction with ARL8B. Interacts (GTP-bound form) with RUFY1; the interaction is required for RUFY1 endosomal location. When GTP-bound, interacts with RUFY3 and RUFY4, but not with RUFY1, nor RUFY2. Ubiquitinated at Lys-141 by RNF167, leading to its degradation.

It localises to the late endosome membrane. The protein resides in the lysosome membrane. The protein localises to the cytoplasm. It is found in the cytoskeleton. Its subcellular location is the spindle. It localises to the cell projection. The protein resides in the axon. The protein localises to the synapse. It is found in the cytolytic granule membrane. Its subcellular location is the early endosome membrane. The catalysed reaction is GTP + H2O = GDP + phosphate + H(+). Small GTPase which cycles between active GTP-bound and inactive GDP-bound states. In its active state, binds to a variety of effector proteins playing a key role in the regulation of lysosomal positioning which is important for nutrient sensing, natural killer cell-mediated cytotoxicity and antigen presentation. Along with its effectors, orchestrates lysosomal transport and fusion. Localizes specifically to lysosomal membranes and mediates anterograde lysosomal motility by recruiting PLEKHM2, which in turn recruits the motor protein kinesin-1 on lysosomes. Required for lysosomal and cytolytic granule exocytosis. Critical factor involved in NK cell-mediated cytotoxicity. Drives the polarization of cytolytic granules and microtubule-organizing centers (MTOCs) toward the immune synapse between effector NK lymphocytes and target cells. In neurons, mediates the anterograde axonal long-range transport of presynaptic lysosome-related vesicles required for presynaptic biogenesis and synaptic function. Also acts as a regulator of endosome to lysosome trafficking pathways of special significance for host defense. Recruits RUFY1 onto early endosomes regulating endosomes to trans-Golgi network proteins retrieval. Regulates cargo trafficking to lysosomes by binding to PLEKHM1 and recruiting the HOPS subunit VPS41, resulting in functional assembly of the HOPS complex on lysosomal membranes. Plays an important role in cargo delivery to lysosomes for antigen presentation and microbial killing. Directs the intersection of CD1d with lipid antigens in lysosomes, and plays a role in intersecting phagosomes with lysosomes to generate phagolysosomes that kill microbes. Involved in the process of MHC II presentation. Regulates the delivery of antigens to lysosomes and the formation of MHC II-peptide complexes through the recruitment of the HOPS complex to lysosomes allowing the fusion of late endosomes to lysosomes. May play a role in chromosome segregation. The sequence is that of ADP-ribosylation factor-like protein 8B (ARL8B) from Macaca fascicularis (Crab-eating macaque).